A 395-amino-acid polypeptide reads, in one-letter code: Acetyl-CoA acetyltransferase (395 aa).

The active-site Acyl-thioester intermediate is the C90. Residues Y185 and K230 each contribute to the CoA site. Position 185 (Y185) interacts with K(+). 3 residues coordinate K(+): A246, A247, and A249. S250 lines the CoA pocket. V347 lines the K(+) pocket. Catalysis depends on proton acceptor residues H351 and C381.

The protein belongs to the thiolase-like superfamily. Thiolase family. As to quaternary structure, homotetramer.

It is found in the cytoplasm. It carries out the reaction 2 acetyl-CoA = acetoacetyl-CoA + CoA. It functions in the pathway metabolic intermediate biosynthesis; (R)-mevalonate biosynthesis; (R)-mevalonate from acetyl-CoA: step 1/3. In terms of biological role, acetyl-CoA acetyltransferase; part of the first module of ergosterol biosynthesis pathway that includes the early steps of the pathway, conserved across all eukaryotes, and which results in the formation of mevalonate from acetyl-coenzyme A (acetyl-CoA). Erg10 catalyzes the formation of acetoacetyl-CoA from acetyl-CoA. The first module starts with the action of the cytosolic acetyl-CoA acetyltransferase eg10 that catalyzes the formation of acetoacetyl-CoA. The hydroxymethylglutaryl-CoA synthases erg13 then condenses acetyl-CoA with acetoacetyl-CoA to form HMG-CoA. The rate-limiting step of the early module is the reduction to mevalonate by the 3-hydroxy-3-methylglutaryl-coenzyme A (HMG-CoA) reductases hcs1. This is Acetyl-CoA acetyltransferase (erg10) from Schizosaccharomyces pombe (strain 972 / ATCC 24843) (Fission yeast).